A 345-amino-acid polypeptide reads, in one-letter code: MAASGKLGTFRLPPLPTIREIIKLFGLRAVKQLSQNFLLDLRLTDKIVRKAGSLADVYVYEVGPGPGGITRSILNANVAELLVVEKDTRFIPGLQMLSDAAPGKLRIVHGDVLTYKIEKAFPGNIRRQWEDDPPNVHIIGNLPFSVSTPLIIKWLENISLKDGPFVYGRTKMTLTFQKEVAERLVATTGSKQHSRLSIMAQYLCNVEHLFTIPGKAFVPKPKVDVGVVHLTPLIEPKIKQPFKLVEKVVQNAFQFRRKYCHRGLGMLFPEAQRLESTGRLLQLADIDPTLRPTHLSLMHFKSLCDVYRKMCDEDPQLFTYNFREELKQKKSKGQEKDGDPESCGF.

The N-terminal 27 residues, M1–L27, are a transit peptide targeting the mitochondrion. Residues L38, G63, E85, K86, D111, V112, and N141 each coordinate S-adenosyl-L-methionine.

Belongs to the class I-like SAM-binding methyltransferase superfamily. rRNA adenine N(6)-methyltransferase family. KsgA subfamily. In terms of assembly, interacts with mitochondrial RNA polymerase POLRMT. Interacts with TFAM. Remains bound to the maturing mtSSU until the late stages of assembly. In terms of tissue distribution, ubiquitously expressed.

The protein localises to the mitochondrion. The enzyme catalyses adenosine(N)/adenosine(N+1) in rRNA + 4 S-adenosyl-L-methionine = N(6)-dimethyladenosine(N)/N(6)-dimethyladenosine(N+1) in rRNA + 4 S-adenosyl-L-homocysteine + 4 H(+). Mitochondrial methyltransferase which uses S-adenosyl methionine to dimethylate two highly conserved adjacent adenosine residues (A1006 and A1007) within the loop of helix 45 at the 3-prime end of 12S rRNA, thereby regulating the assembly or stability of the small subunit of the mitochondrial ribosome. Also required for basal transcription of mitochondrial DNA, probably via its interaction with POLRMT and TFAM. Stimulates transcription independently of the methyltransferase activity. This is Dimethyladenosine transferase 1, mitochondrial (Tfb1m) from Mus musculus (Mouse).